The sequence spans 356 residues: 3-isopropylmalate dehydrogenase (356 aa).

Residues Arg95, Arg105, Arg133, and Asp223 each contribute to the substrate site. The Mg(2+) site is built by Asp223, Asp247, and Asp251. 281-293 (GSAPDIAGQNKAN) is an NAD(+) binding site.

This sequence belongs to the isocitrate and isopropylmalate dehydrogenases family. LeuB type 1 subfamily. Homodimer. The cofactor is Mg(2+). Requires Mn(2+) as cofactor.

It localises to the cytoplasm. It carries out the reaction (2R,3S)-3-isopropylmalate + NAD(+) = 4-methyl-2-oxopentanoate + CO2 + NADH. The protein operates within amino-acid biosynthesis; L-leucine biosynthesis; L-leucine from 3-methyl-2-oxobutanoate: step 3/4. Functionally, catalyzes the oxidation of 3-carboxy-2-hydroxy-4-methylpentanoate (3-isopropylmalate) to 3-carboxy-4-methyl-2-oxopentanoate. The product decarboxylates to 4-methyl-2 oxopentanoate. The polypeptide is 3-isopropylmalate dehydrogenase (Neisseria meningitidis serogroup A / serotype 4A (strain DSM 15465 / Z2491)).